A 1640-amino-acid chain; its full sequence is RING finger protein 17 (1640 aa).

Residues 30-73 (CTRCGRKVSVASGDHHKFPCGHAFCELCLLAPQEYTTSKCTDCE) form an RING-type zinc finger. A Phosphoserine modification is found at Ser134. Lys229 carries the post-translational modification N6-acetyllysine. Disordered stretches follow at residues 348-376 (TDET…TKEM) and 413-435 (DDPI…APVG). The segment covering 360–373 (APDRHLEGKKKQPT) has biased composition (basic and acidic residues). 2 Tudor domains span residues 751-809 (CPLQ…FLEP) and 985-1044 (KWEC…LKTM). Basic and acidic residues predominate over residues 1170 to 1184 (NEHKVPDSKGKKSES). The tract at residues 1170–1191 (NEHKVPDSKGKKSESRSTGCYR) is disordered. 2 consecutive Tudor domains span residues 1246 to 1303 (SWKK…PDTP) and 1496 to 1556 (DFSS…LMQY).

Interacts with MXD1, MXD3, MXD4, MXI1 and PIWIL1. Self-associates. As to expression, expressed at high levels in adult testis. Expressed in male germ cells (at protein level). Expressed at lower levels in adult thyroid, submaxillary gland, ovary and epididymis.

The protein resides in the cytoplasm. It is found in the nucleus. In terms of biological role, seems to be involved in regulation of transcriptional activity of MYC. In vitro, inhibits DNA-binding activity of Mad-MAX heterodimers. Can recruit Mad transcriptional repressors (MXD1, MXD3, MXD4 and MXI1) to the cytoplasm. May be involved in spermiogenesis. The polypeptide is RING finger protein 17 (Rnf17) (Mus musculus (Mouse)).